A 190-amino-acid chain; its full sequence is Recombination protein RecR (190 aa).

The C4-type zinc-finger motif lies at 58 to 73 (CTQCGGLSEDELCYIC). The Toprim domain occupies 81 to 167 (SSLCLVESAR…HFTKIAQGVP (87 aa)).

Belongs to the RecR family.

May play a role in DNA repair. It seems to be involved in an RecBC-independent recombinational process of DNA repair. It may act with RecF and RecO. The chain is Recombination protein RecR from Nitratiruptor sp. (strain SB155-2).